The chain runs to 479 residues: Beta-amyrin 28-monooxygenase (479 aa).

The chain crosses the membrane as a helical span at residues 5–25 (FYLSLLLLFVTFISLSLFFIF). Cys426 serves as a coordination point for heme.

Belongs to the cytochrome P450 family. It depends on heme as a cofactor. Expressed in roots, nodules and flowers.

The protein resides in the membrane. The enzyme catalyses beta-amyrin + 3 reduced [NADPH--hemoprotein reductase] + 3 O2 = oleanolate + 3 oxidized [NADPH--hemoprotein reductase] + 4 H2O + 4 H(+). Catalyzes the carboxylation of beta-amyrin at the C-28 position to form oleanolic acid. Involved in an early step in the hemolytic saponin biosynthetic pathway. Catalyzes the carboxylation of alpha-amyrin and lupeol at the C-28 position to form ursolic acid and betulinic acid respectively. The sequence is that of Beta-amyrin 28-monooxygenase from Medicago truncatula (Barrel medic).